Consider the following 723-residue polypeptide: MSEEQASSPSAKMGDEEKPVGAGEEKQKEGSKKKNKEGSGDGGRAELNPWPEYINTRLEMYNKLKAEHDSILAEKAEKDSKPIKVTLPDGKQVDAESWKTTPYQIACGISQGLADNTVIAKVNKAVWDLDRPLEEDCTLELLKFEDEEAQAVYWHSSAHIMGEAMERVYGGCLCYGPPIENGFYYDMYLEEGGVSSNDFSSLETLCKKIIKEKQAFERLEVKKETLLEMFKYNKFKCRILNEKVNTPTTTVYRCGPLIDLCRGPHVRHTGKIKTLKIHKNSSTYWEGKSDMETLQRIYGISFPDPKMLKEWEKFQEEAKNRDHRKIGRDQELYFFHELSPGSCFFLPKGAYIYNTLIEFIRSEYRKRGFQEVVTPNIYNSRLWVTSGHWEHYSENMFSFEVEKELFALKPMNCPGHCLMFDHRPRSWRELPLRVADFGVLHRNELSGALTGLTRVRRFQQDDAHIFCAMEQIEDEIKGCLDFLRTVYSIFGFSFKLNLSTRPEKFLGDIEVWNQAEKQLENSLNDFGEKWELNPGDGAFYGPKIDIQIKDAIGRYHQCATIQLDFQLPIRFNLTFVSHDGDDKKKPVIIHRAILGSVERMIAILTENYGGKWPFWLSPRQVMVVPVGPTCDEYAQKVRQQFHNAKFMVDIDLDPGCTLNKKIRNAQLAQYNFILVVGEKEKTSGTVNIRTRDNKVHGERTISETIERLQQLKHSRSKQAEEEF.

Residues 1–10 are compositionally biased toward polar residues; that stretch reads MSEEQASSPS. The tract at residues 1–49 is disordered; that stretch reads MSEEQASSPSAKMGDEEKPVGAGEEKQKEGSKKKNKEGSGDGGRAELNP. Positions 13–39 are enriched in basic and acidic residues; that stretch reads MGDEEKPVGAGEEKQKEGSKKKNKEGS. Phosphoserine is present on Ser-39. In terms of domain architecture, TGS spans 79-143; the sequence is DSKPIKVTLP…EEDCTLELLK (65 aa). The residue at position 243 (Lys-243) is an N6-acetyllysine. Thr-246 is modified (phosphothreonine). Tyr-298 carries the post-translational modification Phosphotyrosine. Thr-453 is subject to Phosphothreonine. Ser-702 is modified (phosphoserine).

This sequence belongs to the class-II aminoacyl-tRNA synthetase family. As to quaternary structure, homodimer. ISGylated.

It localises to the cytoplasm. The enzyme catalyses tRNA(Thr) + L-threonine + ATP = L-threonyl-tRNA(Thr) + AMP + diphosphate + H(+). Functionally, catalyzes the attachment of threonine to tRNA(Thr) in a two-step reaction: threonine is first activated by ATP to form Thr-AMP and then transferred to the acceptor end of tRNA(Thr). Also edits incorrectly charged tRNA(Thr) via its editing domain, at the post-transfer stage. The sequence is that of Threonine--tRNA ligase 1, cytoplasmic (TARS1) from Bos taurus (Bovine).